We begin with the raw amino-acid sequence, 149 residues long: MKIIIDGDGCAGRDIIEKVGKKHSVKILIYCTINHMINSDYSEVRMVDDGFQSVDMYVANNTYENDIVITQDYGVAAMALGKGALAISPRGYIYDNDNIDRLLFERHLSQKNRRAGGKSKGNHKRNKEDDDRLYYNLEVLIEKVKAISN.

Belongs to the UPF0178 family.

This chain is UPF0178 protein CPR_2251, found in Clostridium perfringens (strain SM101 / Type A).